Here is a 131-residue protein sequence, read N- to C-terminus: Small ribosomal subunit protein uS8 (131 aa).

Belongs to the universal ribosomal protein uS8 family. In terms of assembly, part of the 30S ribosomal subunit. Contacts proteins S5 and S12.

In terms of biological role, one of the primary rRNA binding proteins, it binds directly to 16S rRNA central domain where it helps coordinate assembly of the platform of the 30S subunit. In Thermodesulfovibrio yellowstonii (strain ATCC 51303 / DSM 11347 / YP87), this protein is Small ribosomal subunit protein uS8.